The primary structure comprises 226 residues: B-cell antigen receptor complex-associated protein alpha chain (226 aa).

The N-terminal stretch at methionine 1–alanine 32 is a signal peptide. The Ig-like C2-type domain maps to leucine 33 to glutamine 116. The Extracellular portion of the chain corresponds to leucine 33 to arginine 143. Residues cysteine 54 and cysteine 106 are joined by a disulfide bond. N-linked (GlcNAc...) asparagine glycosylation is found at asparagine 57, asparagine 63, asparagine 73, asparagine 88, asparagine 97, and asparagine 112. Residues isoleucine 144 to phenylalanine 165 form a helical membrane-spanning segment. The Cytoplasmic segment spans residues arginine 166–proline 226. The region spanning aspartate 177–glycine 205 is the ITAM domain. 2 positions are modified to phosphotyrosine; by SRC-type Tyr-kinases: tyrosine 188 and tyrosine 199. Residue arginine 204 is modified to Asymmetric dimethylarginine; by PRMT1. Position 210 is a phosphotyrosine; by Tyr-kinases (tyrosine 210).

In terms of assembly, heterodimer of alpha and beta chains; disulfide-linked. Part of the B-cell antigen receptor complex where the alpha/beta chain heterodimer is non-covalently associated with an antigen-specific membrane-bound surface immunoglobulin of two heavy chains and two light chains. Interacts through its phosphorylated ITAM domain with the SH2 domains of SYK which stimulates SYK autophosphorylation and activation. Also interacts, when phosphorylated on Tyr-210, with the SH2 domain of BLNK/SLP65, bringing BLNK into proximity with SYK and allowing SYK to phosphorylate BLNK which is necessary for trafficking of the BCR to late endosomes. Interacts with Src-family tyrosine kinases including FYN and LYN, increasing their activity. In terms of processing, phosphorylated on tyrosine, serine and threonine residues upon B-cell activation. Phosphorylation of tyrosine residues by Src-family kinases is an early and essential feature of the BCR signaling cascade. The phosphorylated tyrosines serve as docking sites for SH2-domain containing kinases, leading to their activation which in turn leads to phosphorylation of downstream targets. Phosphorylated by LYN. Phosphorylation of serine and threonine residues may prevent subsequent tyrosine phosphorylation. Arginine methylation in the ITAM domain may interfere with the binding of SYK. It promotes signals leading to B-cell differentiation. B-cells.

It localises to the cell membrane. Required in cooperation with CD79B for initiation of the signal transduction cascade activated by binding of antigen to the B-cell antigen receptor complex (BCR) which leads to internalization of the complex, trafficking to late endosomes and antigen presentation. Also required for BCR surface expression and for efficient differentiation of pro- and pre-B-cells. Stimulates SYK autophosphorylation and activation. Binds to BLNK, bringing BLNK into proximity with SYK and allowing SYK to phosphorylate BLNK. Also interacts with and increases activity of some Src-family tyrosine kinases. Represses BCR signaling during development of immature B-cells. The sequence is that of B-cell antigen receptor complex-associated protein alpha chain (CD79A) from Homo sapiens (Human).